Consider the following 343-residue polypeptide: D-alanine--D-alanine ligase (343 aa).

The region spanning lysine 132–glutamate 337 is the ATP-grasp domain. Aspartate 165–glutamate 220 serves as a coordination point for ATP. Mg(2+)-binding residues include aspartate 291, glutamate 304, and asparagine 306.

The protein belongs to the D-alanine--D-alanine ligase family. Requires Mg(2+) as cofactor. The cofactor is Mn(2+).

It is found in the cytoplasm. The catalysed reaction is 2 D-alanine + ATP = D-alanyl-D-alanine + ADP + phosphate + H(+). Its pathway is cell wall biogenesis; peptidoglycan biosynthesis. In terms of biological role, cell wall formation. This chain is D-alanine--D-alanine ligase, found in Halothermothrix orenii (strain H 168 / OCM 544 / DSM 9562).